The chain runs to 145 residues: D-aminoacyl-tRNA deacylase (145 aa).

The Gly-cisPro motif, important for rejection of L-amino acids signature appears at 137–138; the sequence is GP.

This sequence belongs to the DTD family. As to quaternary structure, homodimer.

The protein resides in the cytoplasm. The catalysed reaction is glycyl-tRNA(Ala) + H2O = tRNA(Ala) + glycine + H(+). The enzyme catalyses a D-aminoacyl-tRNA + H2O = a tRNA + a D-alpha-amino acid + H(+). In terms of biological role, an aminoacyl-tRNA editing enzyme that deacylates mischarged D-aminoacyl-tRNAs. Also deacylates mischarged glycyl-tRNA(Ala), protecting cells against glycine mischarging by AlaRS. Acts via tRNA-based rather than protein-based catalysis; rejects L-amino acids rather than detecting D-amino acids in the active site. By recycling D-aminoacyl-tRNA to D-amino acids and free tRNA molecules, this enzyme counteracts the toxicity associated with the formation of D-aminoacyl-tRNA entities in vivo and helps enforce protein L-homochirality. The chain is D-aminoacyl-tRNA deacylase from Shewanella denitrificans (strain OS217 / ATCC BAA-1090 / DSM 15013).